Here is a 303-residue protein sequence, read N- to C-terminus: Monoglyceride lipase (303 aa).

Thr10 is subject to Phosphothreonine. At Tyr58 the chain carries 3'-nitrotyrosine. Ser122 serves as the catalytic Nucleophile. Residues Asp239 and His269 each act as charge relay system in the active site.

Belongs to the AB hydrolase superfamily. Monoacylglycerol lipase family. Homodimer. Detected in adipose tissue, lung, liver, kidney, brain and heart.

It localises to the cytoplasm. The protein resides in the cytosol. Its subcellular location is the membrane. The enzyme catalyses Hydrolyzes glycerol monoesters of long-chain fatty acids.. It catalyses the reaction a 1-acylglycerol + H2O = glycerol + a fatty acid + H(+). It carries out the reaction a 2-acylglycerol + H2O = glycerol + a fatty acid + H(+). The catalysed reaction is 1-octanoylglycerol + H2O = octanoate + glycerol + H(+). The enzyme catalyses 2-(5Z,8Z,11Z,14Z-eicosatetraenoyl)-glycerol + H2O = glycerol + (5Z,8Z,11Z,14Z)-eicosatetraenoate + H(+). It catalyses the reaction 1-decanoylglycerol + H2O = decanoate + glycerol + H(+). It carries out the reaction 1-dodecanoylglycerol + H2O = dodecanoate + glycerol + H(+). The catalysed reaction is 1-tetradecanoylglycerol + H2O = tetradecanoate + glycerol + H(+). The enzyme catalyses 2-hexadecanoylglycerol + H2O = glycerol + hexadecanoate + H(+). It catalyses the reaction 1-(9Z-octadecenoyl)-glycerol + H2O = glycerol + (9Z)-octadecenoate + H(+). It carries out the reaction 2-(9Z-octadecenoyl)-glycerol + H2O = glycerol + (9Z)-octadecenoate + H(+). The catalysed reaction is 2-(9Z,12Z-octadecadienoyl)-glycerol + H2O = (9Z,12Z)-octadecadienoate + glycerol + H(+). The enzyme catalyses 1-(5Z,8Z,11Z,14Z-eicosatetraenoyl)-glycerol + H2O = glycerol + (5Z,8Z,11Z,14Z)-eicosatetraenoate + H(+). It catalyses the reaction 1-(9Z,12Z-octadecadienoyl)-glycerol + H2O = (9Z,12Z)-octadecadienoate + glycerol + H(+). It carries out the reaction 1-hexadecanoylglycerol + H2O = glycerol + hexadecanoate + H(+). The catalysed reaction is 1-octadecanoylglycerol + H2O = octadecanoate + glycerol + H(+). The enzyme catalyses prostaglandin E2 1-glyceryl ester + H2O = prostaglandin E2 + glycerol + H(+). It catalyses the reaction prostaglandin D2-1-glycerol ester + H2O = prostaglandin D2 + glycerol + H(+). It carries out the reaction 2-glyceryl-15-deoxy-Delta(12,14)-prostaglandin J2 + H2O = 15-deoxy-Delta(12,14)-prostaglandin J2 + glycerol + H(+). The catalysed reaction is prostaglandin F2alpha 1-glyceryl ester + H2O = prostaglandin F2alpha + glycerol + H(+). The protein operates within glycerolipid metabolism; triacylglycerol degradation. In terms of biological role, converts monoacylglycerides to free fatty acids and glycerol. Hydrolyzes the endocannabinoid 2-arachidonoylglycerol, and thereby contributes to the regulation of endocannabinoid signaling, nociperception and perception of pain. Regulates the levels of fatty acids that serve as signaling molecules and promote cancer cell migration, invasion and tumor growth. The polypeptide is Monoglyceride lipase (Homo sapiens (Human)).